Reading from the N-terminus, the 79-residue chain is Acyl carrier protein (79 aa).

The Carrier domain occupies 2-77 (SEIGERVKKI…DATKFLEKNA (76 aa)). Residue Ser37 is modified to O-(pantetheine 4'-phosphoryl)serine.

This sequence belongs to the acyl carrier protein (ACP) family. In terms of processing, 4'-phosphopantetheine is transferred from CoA to a specific serine of apo-ACP by AcpS. This modification is essential for activity because fatty acids are bound in thioester linkage to the sulfhydryl of the prosthetic group.

Its subcellular location is the cytoplasm. Its pathway is lipid metabolism; fatty acid biosynthesis. Functionally, carrier of the growing fatty acid chain in fatty acid biosynthesis. The sequence is that of Acyl carrier protein from Rhodopseudomonas palustris (strain HaA2).